The primary structure comprises 123 residues: Protein Rev (123 aa).

Residue serine 5 is modified to Phosphoserine; by host CK2. The interval 18-26 (IIKTLYQSN) is homomultimerization. Disordered regions lie at residues 24-50 (QSNP…ARQR) and 79-123 (EGLS…GTKE). The Nuclear localization signal and RNA-binding (RRE) signature appears at 34–50 (TRQARKNRRRRWRARQR). The span at 36-50 (QARKNRRRRWRARQR) shows a compositional bias: basic residues. Positions 73-84 (FQLPPLEGLSLD) match the Nuclear export signal and binding to XPO1 motif. Residue serine 92 is modified to Phosphoserine; by host. Residues 93 to 105 (GTQQPQGTETGVG) show a composition bias toward low complexity.

This sequence belongs to the HIV-1 REV protein family. As to quaternary structure, homomultimer; when bound to the RRE. Multimeric assembly is essential for activity and may involve XPO1. Binds to human KPNB1, XPO1, TNPO1, RANBP5 and IPO7. Interacts with the viral Integrase. Interacts with human KHDRBS1. Interacts with human NAP1; this interaction decreases Rev multimerization and stimulates its activity. Interacts with human DEAD-box helicases DDX3 and DDX24; these interactions may serve for viral RNA export to the cytoplasm and packaging, respectively. Interacts with human PSIP1; this interaction may inhibit HIV-1 DNA integration by promoting dissociation of the Integrase-LEDGF/p75 complex. Asymmetrically arginine dimethylated at one site by host PRMT6. Methylation impairs the RNA-binding activity and export of viral RNA from the nucleus to the cytoplasm. In terms of processing, phosphorylated by protein kinase CK2. Presence of, and maybe binding to the N-terminus of the regulatory beta subunit of CK2 is necessary for CK2-mediated Rev's phosphorylation.

It is found in the host nucleus. The protein resides in the host nucleolus. It localises to the host cytoplasm. Its function is as follows. Escorts unspliced or incompletely spliced viral pre-mRNAs (late transcripts) out of the nucleus of infected cells. These pre-mRNAs carry a recognition sequence called Rev responsive element (RRE) located in the env gene, that is not present in fully spliced viral mRNAs (early transcripts). This function is essential since most viral proteins are translated from unspliced or partially spliced pre-mRNAs which cannot exit the nucleus by the pathway used by fully processed cellular mRNAs. Rev itself is translated from a fully spliced mRNA that readily exits the nucleus. Rev's nuclear localization signal (NLS) binds directly to KPNB1/Importin beta-1 without previous binding to KPNA1/Importin alpha-1. KPNB1 binds to the GDP bound form of RAN (Ran-GDP) and targets Rev to the nucleus. In the nucleus, the conversion from Ran-GDP to Ran-GTP dissociates Rev from KPNB1 and allows Rev's binding to the RRE in viral pre-mRNAs. Rev multimerization on the RRE via cooperative assembly exposes its nuclear export signal (NES) to the surface. Rev can then form a complex with XPO1/CRM1 and Ran-GTP, leading to nuclear export of the complex. Conversion from Ran-GTP to Ran-GDP mediates dissociation of the Rev/RRE/XPO1/RAN complex, so that Rev can return to the nucleus for a subsequent round of export. Beside KPNB1, also seems to interact with TNPO1/Transportin-1, RANBP5/IPO5 and IPO7/RANBP7 for nuclear import. The nucleoporin-like HRB/RIP is an essential cofactor that probably indirectly interacts with Rev to release HIV RNAs from the perinuclear region to the cytoplasm. The polypeptide is Protein Rev (Human immunodeficiency virus type 1 group M subtype G (isolate 92NG083) (HIV-1)).